A 147-amino-acid chain; its full sequence is Hemoglobin subunit beta (147 aa).

Val2 bears the N-acetylvaline mark. The 145-residue stretch at 3–147 (HLADDEKAAV…VSTALAHKYH (145 aa)) folds into the Globin domain. Ser45 is subject to Phosphoserine. N6-acetyllysine is present on Lys60. His64 provides a ligand contact to heme b. N6-acetyllysine is present on Lys83. Residue His93 coordinates heme b. Cys94 bears the S-nitrosocysteine mark. Lys145 is subject to N6-acetyllysine.

Belongs to the globin family. Heterotetramer of two alpha chains and two beta chains. As to expression, red blood cells.

In terms of biological role, involved in oxygen transport from the lung to the various peripheral tissues. This Bradypus tridactylus (Pale-throated three-toed sloth) protein is Hemoglobin subunit beta (HBB).